The chain runs to 726 residues: Catalase-peroxidase (726 aa).

Residues 1 to 33 (MSTSDDIHNTTATGKCPFHQGGHDQSAGGGTTT) form a disordered region. A cross-link (tryptophyl-tyrosyl-methioninium (Trp-Tyr) (with M-252)) is located at residues 105 to 226 (WHGAGTYRSI…LGATEMGLIY (122 aa)). The Proton acceptor role is filled by His106. Positions 226–252 (YVNPEGPDHSGEPLSAAAAIRATFGNM) form a cross-link, tryptophyl-tyrosyl-methioninium (Tyr-Met) (with W-105). Heme b is bound at residue His267.

Belongs to the peroxidase family. Peroxidase/catalase subfamily. As to quaternary structure, homodimer or homotetramer. The cofactor is heme b. Post-translationally, formation of the three residue Trp-Tyr-Met cross-link is important for the catalase, but not the peroxidase activity of the enzyme.

It carries out the reaction H2O2 + AH2 = A + 2 H2O. The enzyme catalyses 2 H2O2 = O2 + 2 H2O. Bifunctional enzyme with both catalase and broad-spectrum peroxidase activity. The protein is Catalase-peroxidase of Escherichia coli O1:K1 / APEC.